The following is a 443-amino-acid chain: Threonine/serine transporter TdcC (443 aa).

11 helical membrane passes run 22 to 42 (TTWTLGLFGTAIGAGVLFFPI), 44 to 64 (AGFGGLIPILLMLVLAYPIAF), 97 to 117 (GVVITFLYFFAICPLLWIYGV), 140 to 160 (FVALFLLLLMAFVIWFGKDLM), 163 to 183 (VMSYLVWPFIASLVLISLSLI), 207 to 227 (ILVTVWLGISIMVFSFNFSPI), 261 to 281 (MLMVAVVMFFAFSCLFTLSPA), 319 to 339 (ASIIALVAIFKSFFGHYLGTL), 366 to 386 (ISMIFIMGSTWVVAYANPNIL), 389 to 409 (IEAMGAPIIASLLCLLPMYAI), and 423 to 443 (DNVFVTVIGLLTILNIVYKLF).

The protein belongs to the amino acid/polyamine transporter 2 family. SdaC/TdcC subfamily.

The protein resides in the cell inner membrane. It catalyses the reaction L-threonine(in) + H(+)(in) = L-threonine(out) + H(+)(out). The enzyme catalyses L-serine(in) + H(+)(in) = L-serine(out) + H(+)(out). Its function is as follows. Involved in the import of threonine and serine into the cell, with the concomitant import of a proton (symport system). In Citrobacter koseri (strain ATCC BAA-895 / CDC 4225-83 / SGSC4696), this protein is Threonine/serine transporter TdcC.